The primary structure comprises 63 residues: Ferredoxin (63 aa).

The 29-residue stretch at 3–31 folds into the 4Fe-4S ferredoxin-type domain; that stretch reads WKVSVDVDTCIGDAICASLCPDVFEMGDD. Residues Cys-12, Asp-15, and Cys-18 each contribute to the [4Fe-4S] cluster site. A disulfide bridge links Cys-22 with Cys-45. Cys-53 is a binding site for [4Fe-4S] cluster.

The cofactor is [4Fe-4S] cluster. [3Fe-4S] cluster is required as a cofactor.

Ferredoxins are iron-sulfur proteins that transfer electrons in a wide variety of metabolic reactions. The polypeptide is Ferredoxin (fdxA) (Thermococcus kodakarensis (strain ATCC BAA-918 / JCM 12380 / KOD1) (Pyrococcus kodakaraensis (strain KOD1))).